The sequence spans 59 residues: Potassium channel toxin alpha-KTx 16.7 (59 aa).

Residues 1–22 (MKILSILLIALVICSISICTEA) form the signal peptide. Cystine bridges form between cysteine 30/cysteine 51, cysteine 36/cysteine 56, and cysteine 40/cysteine 58.

It belongs to the short scorpion toxin superfamily. Potassium channel inhibitor family. Alpha-KTx 16 subfamily. In terms of tissue distribution, expressed by the venom gland.

It localises to the secreted. May play a role in blocking voltage-gated potassium channels Kv1.2/KCNA2, and Kv1.3/KCNA3. Blocks the voltage-gated potassium channel Kv1.3/KCNA3, with an IC(50) of 118.3 +-55.8 nM. This Mesobuthus gibbosus (Mediterranean checkered scorpion) protein is Potassium channel toxin alpha-KTx 16.7.